A 539-amino-acid polypeptide reads, in one-letter code: Putative cysteine ligase BshC (539 aa).

Positions 455–475 (LQKNAAFIQDQLLFLERTVTK) form a coiled coil.

It belongs to the BshC family.

Functionally, involved in bacillithiol (BSH) biosynthesis. May catalyze the last step of the pathway, the addition of cysteine to glucosamine malate (GlcN-Mal) to generate BSH. The protein is Putative cysteine ligase BshC of Bacillus velezensis (strain DSM 23117 / BGSC 10A6 / LMG 26770 / FZB42) (Bacillus amyloliquefaciens subsp. plantarum).